Consider the following 273-residue polypeptide: Ribosomal RNA small subunit methyltransferase I (273 aa).

It belongs to the methyltransferase superfamily. RsmI family.

Its subcellular location is the cytoplasm. The catalysed reaction is cytidine(1402) in 16S rRNA + S-adenosyl-L-methionine = 2'-O-methylcytidine(1402) in 16S rRNA + S-adenosyl-L-homocysteine + H(+). In terms of biological role, catalyzes the 2'-O-methylation of the ribose of cytidine 1402 (C1402) in 16S rRNA. The polypeptide is Ribosomal RNA small subunit methyltransferase I (Xylella fastidiosa (strain Temecula1 / ATCC 700964)).